The chain runs to 194 residues: Prostaglandin-H2 D-isomerase (194 aa).

The first 24 residues, 1–24, serve as a signal peptide directing secretion; the sequence is MAASHTLWMGLVLLGVLGVLQTRA. Glutamine 25 bears the Pyrrolidone carboxylic acid mark. N-linked (GlcNAc...) asparagine glycosylation is present at asparagine 51. The active-site Nucleophile is cysteine 65. Asparagine 78 is a glycosylation site (N-linked (GlcNAc...) asparagine). Cysteine 89 and cysteine 189 are oxidised to a cystine.

The protein belongs to the calycin superfamily. Lipocalin family. In terms of assembly, monomer. In terms of tissue distribution, in the male reproductive system, it is expressed in the testis and epididymis, and is secreted into the seminal fluid.

The protein localises to the rough endoplasmic reticulum. Its subcellular location is the nucleus membrane. It is found in the golgi apparatus. The protein resides in the cytoplasm. It localises to the perinuclear region. The protein localises to the secreted. The catalysed reaction is prostaglandin H2 = prostaglandin D2. Its function is as follows. Catalyzes the conversion of PGH2 to PGD2, a prostaglandin involved in smooth muscle contraction/relaxation and a potent inhibitor of platelet aggregation. Involved in a variety of CNS functions, such as sedation, NREM sleep and PGE2-induced allodynia, and may have an anti-apoptotic role in oligodendrocytes. Binds small non-substrate lipophilic molecules, including biliverdin, bilirubin, retinal, retinoic acid and thyroid hormone, and may act as a scavenger for harmful hydrophobic molecules and as a secretory retinoid and thyroid hormone transporter. Possibly involved in development and maintenance of the blood-brain, blood-retina, blood-aqueous humor and blood-testis barrier. It is likely to play important roles in both maturation and maintenance of the central nervous system and male reproductive system. Involved in PLA2G3-dependent maturation of mast cells. PLA2G3 is secreted by immature mast cells and acts on nearby fibroblasts upstream to PTDGS to synthesize PGD2, which in turn promotes mast cell maturation and degranulation via PTGDR. In Equus caballus (Horse), this protein is Prostaglandin-H2 D-isomerase (PTGDS).